The chain runs to 303 residues: N-acetyl-D-glucosamine kinase (303 aa).

Residues 4-11 (GFDIGGTK) and 133-140 (GVGGGLVF) each bind ATP. The Zn(2+) site is built by histidine 157, cysteine 177, cysteine 179, and cysteine 184.

Belongs to the ROK (NagC/XylR) family. NagK subfamily.

The enzyme catalyses N-acetyl-D-glucosamine + ATP = N-acetyl-D-glucosamine 6-phosphate + ADP + H(+). Its pathway is cell wall biogenesis; peptidoglycan recycling. In terms of biological role, catalyzes the phosphorylation of N-acetyl-D-glucosamine (GlcNAc) derived from cell-wall degradation, yielding GlcNAc-6-P. The protein is N-acetyl-D-glucosamine kinase of Shigella flexneri serotype 5b (strain 8401).